The chain runs to 136 residues: Large ribosomal subunit protein bL17 (136 aa).

It belongs to the bacterial ribosomal protein bL17 family. As to quaternary structure, part of the 50S ribosomal subunit. Contacts protein L32.

The protein is Large ribosomal subunit protein bL17 of Rickettsia canadensis (strain McKiel).